Here is a 655-residue protein sequence, read N- to C-terminus: Very long-chain specific acyl-CoA dehydrogenase, mitochondrial (655 aa).

The transit peptide at 1–40 directs the protein to the mitochondrion; that stretch reads MQSARMTPSVGRQLLRLGARSSRSAALQGQPRPTSAQRLY. The tract at residues 1 to 70 is disordered; sequence MQSARMTPSV…TREKPARAES (70 aa). Residues 21-37 are compositionally biased toward polar residues; the sequence is SSRSAALQGQPRPTSAQ. The segment at 41–482 is catalytic; that stretch reads ASEATQAVLE…ALQGCMDKGK (442 aa). At Lys-51 the chain carries N6-acetyllysine. Basic and acidic residues predominate over residues 60-70; the sequence is STREKPARAES. N6-acetyllysine; alternate occurs at positions 71 and 127. An N6-succinyllysine; alternate mark is found at Lys-71 and Lys-127. Position 195 is an N6-succinyllysine (Lys-195). FAD is bound at residue 214-223; that stretch reads FCLTEPSSGS. Cys-237 carries the post-translational modification S-nitrosocysteine. Residue Lys-239 is modified to N6-acetyllysine; alternate. N6-succinyllysine; alternate is present on Lys-239. Residue 249-251 coordinates FAD; it reads WIS. At Lys-268 the chain carries N6-succinyllysine. Lys-276 and Lys-278 each carry N6-acetyllysine; alternate. N6-succinyllysine; alternate occurs at positions 276 and 278. Residues Lys-298 and Lys-316 each carry the N6-acetyllysine modification. Lys-331 carries the N6-acetyllysine; alternate modification. Lys-331 carries the post-translational modification N6-succinyllysine; alternate. The residue at position 372 (Lys-372) is an N6-succinyllysine. 461-463 is a binding site for substrate; the sequence is FEG. The active-site Proton acceptor is the Glu-462. Residue 464-466 coordinates FAD; it reads TND. Lys-482 is subject to N6-acetyllysine; alternate. The residue at position 482 (Lys-482) is an N6-succinyllysine; alternate. A membrane-anchoring region spans residues 483 to 516; sequence ELTGLGNALKNPLGNVGLLIGEASKQLRRRTGIG. A phosphoserine mark is found at Ser-517 and Ser-522. N6-acetyllysine is present on Lys-550. The residue at position 556 (Lys-556) is an N6-acetyllysine; alternate. Lys-556 bears the N6-succinyllysine; alternate mark. Gln-562 lines the FAD pocket. Position 639 is an N6-succinyllysine (Lys-639).

It belongs to the acyl-CoA dehydrogenase family. As to quaternary structure, homodimer. Homodimerizes after import into the mitochondrion. FAD serves as cofactor. Post-translationally, S-nitrosylation at Cys-237 in liver improves catalytic efficiency. In terms of tissue distribution, widely expressed (at protein level).

Its subcellular location is the mitochondrion inner membrane. It carries out the reaction a very-long-chain 2,3-saturated fatty acyl-CoA + oxidized [electron-transfer flavoprotein] + H(+) = a very-long-chain (2E)-enoyl-CoA + reduced [electron-transfer flavoprotein]. It catalyses the reaction dodecanoyl-CoA + oxidized [electron-transfer flavoprotein] + H(+) = (2E)-dodecenoyl-CoA + reduced [electron-transfer flavoprotein]. The enzyme catalyses tetradecanoyl-CoA + oxidized [electron-transfer flavoprotein] + H(+) = (2E)-tetradecenoyl-CoA + reduced [electron-transfer flavoprotein]. The catalysed reaction is oxidized [electron-transfer flavoprotein] + hexadecanoyl-CoA + H(+) = (2E)-hexadecenoyl-CoA + reduced [electron-transfer flavoprotein]. It carries out the reaction octadecanoyl-CoA + oxidized [electron-transfer flavoprotein] + H(+) = (2E)-octadecenoyl-CoA + reduced [electron-transfer flavoprotein]. It catalyses the reaction eicosanoyl-CoA + oxidized [electron-transfer flavoprotein] + H(+) = (2E)-eicosenoyl-CoA + reduced [electron-transfer flavoprotein]. The enzyme catalyses docosanoyl-CoA + oxidized [electron-transfer flavoprotein] + H(+) = (2E)-docosenoyl-CoA + reduced [electron-transfer flavoprotein]. The catalysed reaction is tetracosanoyl-CoA + oxidized [electron-transfer flavoprotein] + H(+) = (2E)-tetracosenoyl-CoA + reduced [electron-transfer flavoprotein]. It participates in lipid metabolism; mitochondrial fatty acid beta-oxidation. Its function is as follows. Very long-chain specific acyl-CoA dehydrogenase is one of the acyl-CoA dehydrogenases that catalyze the first step of mitochondrial fatty acid beta-oxidation, an aerobic process breaking down fatty acids into acetyl-CoA and allowing the production of energy from fats. The first step of fatty acid beta-oxidation consists in the removal of one hydrogen from C-2 and C-3 of the straight-chain fatty acyl-CoA thioester, resulting in the formation of trans-2-enoyl-CoA. Among the different mitochondrial acyl-CoA dehydrogenases, very long-chain specific acyl-CoA dehydrogenase acts specifically on acyl-CoAs with saturated 12 to 24 carbons long primary chains. The protein is Very long-chain specific acyl-CoA dehydrogenase, mitochondrial of Rattus norvegicus (Rat).